The chain runs to 78 residues: Acyl carrier protein (78 aa).

The Carrier domain maps to 2 to 77 (SNFEERVKKI…AAIDYVVSSA (76 aa)). O-(pantetheine 4'-phosphoryl)serine is present on serine 37.

It belongs to the acyl carrier protein (ACP) family. In terms of processing, 4'-phosphopantetheine is transferred from CoA to a specific serine of apo-ACP by AcpS. This modification is essential for activity because fatty acids are bound in thioester linkage to the sulfhydryl of the prosthetic group.

Its subcellular location is the cytoplasm. It participates in lipid metabolism; fatty acid biosynthesis. Carrier of the growing fatty acid chain in fatty acid biosynthesis. Is probably involved in the biosynthesis of docosahexaenoic acid (DHA) which is produced by this bacterium as a fatty acyl component in its membrane lipid. The polypeptide is Acyl carrier protein (Moritella marina (Vibrio marinus)).